Reading from the N-terminus, the 355-residue chain is Methylthioribose-1-phosphate isomerase (355 aa).

Substrate-binding positions include 47–49, arginine 91, and glutamine 199; that span reads RGA. Catalysis depends on aspartate 240, which acts as the Proton donor. Residue 250-251 participates in substrate binding; sequence NK.

Belongs to the eIF-2B alpha/beta/delta subunits family. MtnA subfamily.

It catalyses the reaction 5-(methylsulfanyl)-alpha-D-ribose 1-phosphate = 5-(methylsulfanyl)-D-ribulose 1-phosphate. Its pathway is amino-acid biosynthesis; L-methionine biosynthesis via salvage pathway; L-methionine from S-methyl-5-thio-alpha-D-ribose 1-phosphate: step 1/6. Functionally, catalyzes the interconversion of methylthioribose-1-phosphate (MTR-1-P) into methylthioribulose-1-phosphate (MTRu-1-P). In Oleidesulfovibrio alaskensis (strain ATCC BAA-1058 / DSM 17464 / G20) (Desulfovibrio alaskensis), this protein is Methylthioribose-1-phosphate isomerase.